A 495-amino-acid polypeptide reads, in one-letter code: Cyclic GMP-AMP synthase (495 aa).

The interval 1-128 is disordered; sequence MAARRGKSTR…AGATELAAPA (128 aa). A DNA-binding region spans residues 1 to 134; sequence MAARRGKSTR…AAPARMEAPP (134 aa). Residue K7 is modified to N6-acetyllysine. S13 carries the post-translational modification Phosphoserine. Basic and acidic residues-rich tracts occupy residues 52-76 and 105-116; these read CRREKSGPDPREKPQVRTRTARAED and RAREARSARELR. At K56 the chain carries N6-acetyllysine. Residue S57 is modified to Phosphoserine. Residues 57–68 form a required for association with the cell membrane region; the sequence is SGPDPREKPQVR. The interval 103 to 134 is required for activation upon DNA viral infection; it reads SCRAREARSARELRPQAGATELAAPARMEAPP. Residues 143–148 carry the Nuclear export signal motif; it reads LEKVRL. K145 is subject to N6-lactoyllysine. A DNA-binding region spans residues 147–190; it reads RLSRHEISEAAEVVNWVVEHLLRRLQGGESEFKGVALLRTGSYY. A PolyADP-ribosyl glutamic acid modification is found at E165. T186 is a GTP binding site. Position 188 is a phosphoserine (S188). An ATP-binding site is contributed by S188. Y190 is modified (phosphotyrosine). E200 and D202 together coordinate Mg(2+). D202 serves as a coordination point for 2',3'-cGAMP. A Glycyl lysine isopeptide (Lys-Gly) (interchain with G-Cter in SUMO) cross-link involves residue K206. A Glycyl lysine isopeptide (Lys-Gly) (interchain with G-Cter in ubiquitin) cross-link involves residue K260. E261 carries the post-translational modification 5-glutamyl polyglutamate. The Nuclear localization signal signature appears at 268 to 278; that stretch reads GVTVERKRRGS. Residue S278 is modified to Phosphoserine. A GTP-binding site is contributed by D294. Mg(2+) is bound at residue D294. 2',3'-cGAMP is bound at residue D294. The interaction with collided ribosomes stretch occupies residues 316–357; that stretch reads SQWLGAKVKNNLKRQPFYLVPKHAKEGSGFQEETWRLSFSHI. A Glycyl lysine isopeptide (Lys-Gly) (interchain with G-Cter in SUMO); alternate cross-link involves residue K322. A Glycyl lysine isopeptide (Lys-Gly) (interchain with G-Cter in ubiquitin); alternate cross-link involves residue K322. Residues K337 and R351 each coordinate 2',3'-cGAMP. GTP is bound at residue 351–358; sequence RLSFSHIE. Residue E358 participates in ATP binding. K359 is subject to N6-acetyllysine. Residue K359 forms a Glycyl lysine isopeptide (Lys-Gly) (interchain with G-Cter in SUMO); alternate linkage. K359 is covalently cross-linked (Glycyl lysine isopeptide (Lys-Gly) (interchain with G-Cter in ubiquitin); alternate). Residues 359–382 are DNA-binding; that stretch reads KDILKNHGQSKTCCEIDGVKCCRK. Zn(2+) is bound at residue H365. At K369 the chain carries N6-acetyllysine. A Glycyl lysine isopeptide (Lys-Gly) (interchain with G-Cter in SUMO) cross-link involves residue K369. Residues C371, C372, and C379 each contribute to the Zn(2+) site. S-palmitoyl cysteine attachment occurs at residues C379 and C380. Residues K386, K389, K396, and K397 each participate in a glycyl lysine isopeptide (Lys-Gly) (interchain with G-Cter in ubiquitin) cross-link. K389 bears the N6-acetyllysine mark. An ATP-binding site is contributed by K389. S410 is modified (phosphoserine). Residue 410-414 participates in ATP binding; sequence SYHVK. C449 carries the S-palmitoyl cysteine lipid modification. K481 bears the N6-methyllysine mark.

The protein belongs to the mab-21 family. As to quaternary structure, monomer in the absence of DNA. Homodimer in presence of dsDNA: forms a 2:2 dimer with two enzymes binding to two DNA molecules. Interacts with nucleosomes; interaction is mainly mediated via histones H2A and H2B and inactivates the nucleotidyltransferase activity by blocking DNA-binding and subsequent activation. Interacts with PQBP1 (via WW domain). Interacts with TRIM14; this interaction recruits USP14, leading to deubiquitinate and stabilize CGAS and promote type I interferon production. Interacts with ZCCHC3; promoting sensing of dsDNA by CGAS. Interacts (when not monomethylated) with (poly-ADP-ribosylated) PARP1; interaction takes place in the nucleus and prevents the formation of the PARP1-TIMELESS complex. Interacts (when monomethylated) with SGF29; interaction with SGF29 prevents interaction with PARP1. Interacts with PCBP2; preventing the formation of liquid-like droplets in which CGAS is activated. Interacts with IRGM; promoting CGAS degradation. Mg(2+) serves as cofactor. The cofactor is Mn(2+). Requires Zn(2+) as cofactor. The N-terminal disordered part (1-134) is phosphorylated by AURKB during the G2-M transition, blocking CGAS liquid phase separation and preventing activation. Phosphorylation at Tyr-190 by BLK promotes cytosolic retention. Localizes into the nucleus following dephosphorylation at Tyr-190. Phosphorylation at Ser-410 activates the nucleotidyltransferase activity. Dephosphorylation at Ser-410 by PPP6C impairs its ability to bind GTP, thereby inactivating it. Phosphorylation at Ser-188 by PRKDC inhibits its cyclic GMP-AMP synthase activity by impairing homodimerization and activation. Phosphorylation at Ser-278 by AKT (AKT1, AKT2 or AKT3) suppresses the nucleotidyltransferase activity. Phosphorylation at Ser-278 by CDK1 during mitosis leads to its inhibition, thereby preventing CGAS activation by self-DNA during mitosis. Dephosphorylated at Ser-278 by protein phosphatase PP1 upon mitotic exit. Post-translationally, ubiquitinated at Lys-389 via 'Lys-48'-linked polyubiquitin chains, leading to its SQSTM1-mediated autophagic degradation. Interaction with TRIM14 promotes recruitment of USP14, leading to deubiquitinate Lys-389 and stabilize CGAS. Ubiquitinated at Lys-359 by RNF185 via 'Lys-27'-linked polyubiquitination, promoting CGAS cyclic GMP-AMP synthase activity. Monoubiquitination at Lys-322 by TRIM56 promotes oligomerization and subsequent activation. Monoubiquitination by TRIM41 promotes CGAS activation. Ubiquitination at Lys-260 via 'Lys-48'-linked polyubiquitination promotes its degradation. Deubiquitination at Lys-260 by USP29 promotes its stabilization. Deubiquitinated by USP27X, promoting its stabilization. Ubiquitinated at Lys-386 via 'Lys-63'-linked polyubiquitin chains by MARCHF8, leading to the inhibition of its DNA binding ability. In cycling cells, nucleosome-bound CGAS is ubiquitinated at Lys-396 and Lys-397 via 'Lys-48'-linked polyubiquitin chains by the ECS(SPSB3) complex, leading to its degradation: ubiquitination and degradation of nuclear CGAS during G1 and G2 phases is required to promote low intranuclear CGAS abundance before the next mitotic cycle. In terms of processing, sumoylated at Lys-206 by TRIM38 in uninfected cells and during the early phase of viral infection, promoting its stability by preventing ubiquitination at Lys-260 and subsequent degradation. Desumoylated by SENP2 during the late phase of viral infection. Sumoylation at Lys-322, Lys-359 and Lys-369 prevents DNA-binding, oligomerization and nucleotidyltransferase activity. Desumoylation at Lys-322, Lys-359 and Lys-369 by SENP7 relieves inhibition and activates CGAS. Polyglutamylated by TTLL6 at Glu-261, leading to impair DNA-binding activity. Deglutamylated by AGBL5/CCP5 and AGBL6/CCP6. Post-translationally, acetylation at Lys-359, Lys-369 and Lys-389 inhibits the cyclic GMP-AMP synthase activity. Deacetylated upon cytosolic DNA challenge such as viral infections. Acetylation by KAT5 increases the cyclic GMP-AMP synthase activity by promoting DNA-binding and subsequent activation. In terms of processing, proteolytically cleaved by apoptotic caspases during apoptosis, leading to its inactivation. The damage of the nucleus and the mitochondria during apoptosis leads to leakage of nuclear and mitochondrial DNA, which activate CGAS: cleavage and inactivation during apoptosis in required to prevent cytokine overproduction. Cleaved by CASP7 and CASP3 during virus-induced apoptosis, thereby inactivating it and preventing cytokine overproduction. Cleaved by CASP1 upon DNA virus infection; the cleavage impairs cGAMP production. Also cleaved by the pyroptotic CASP4 during non-canonical inflammasome activation; does not cut at the same sites than CASP1. Degraded via selective autophagy following interaction with IRGM. IRGM promotes CGAS recruitment to autophagosome membranes, promoting its SQSTM1/p62-dependent autophagic degradation. Post-translationally, poly-ADP-ribosylation at Glu-165 by PARP1 impairs DNA-binding, thereby preventing the cyclic GMP-AMP synthase activity. In terms of processing, palmitoylation at Cys-449 by ZDHHC18 impairs DNA-binding, thereby preventing the cyclic GMP-AMP synthase activity. Palmitoylation at Cys-379 and Cys-380 by ZDHHC9 promotes homodimerization and cyclic GMP-AMP synthase activity. Depalmitoylation at Cys-379 and Cys-380 by LYPLAL1 impairs homodimerization and cyclic GMP-AMP synthase activity. Monomethylated at Lys-481 by SETD7. Monomethylation promotes interaction with SGF29, preventing interaction between PARP1 nad SGF29. Demethylation by RIOX1 promotes interaction with PARP1, followed by PARP1 inactivation. Post-translationally, lactylation by AARS2 prevents ability to undergo liquid-liquid phase separation (LLPS), thereby inhibiting CGAS activation.

The protein localises to the nucleus. The protein resides in the chromosome. It localises to the cell membrane. It is found in the cytoplasm. Its subcellular location is the cytosol. It catalyses the reaction GTP + ATP = 2',3'-cGAMP + 2 diphosphate. It carries out the reaction GTP + ATP = pppGp(2'-5')A + diphosphate. The catalysed reaction is pppGp(2'-5')A = 2',3'-cGAMP + diphosphate. The enzyme activity is strongly increased by double-stranded DNA (dsDNA), but not by single-stranded DNA or RNA. DNA-binding induces the formation of liquid-like droplets in which CGAS is activated. Liquid-like droplets also create a selective environment that restricts entry of negative regulators, such as TREX1 or BANF1/BAF, allowing sensing of DNA. A number of mechanisms exist to restrict its activity toward self-DNA. The nucleotidyltransferase activity is inhibited in the nucleus via its association with nucleosomes: interacts with the acidic patch of histones H2A and H2B, thereby blocking DNA-binding and subsequent activation. CGAS is also inactive when associated with mitotic chromatin. Chromatin-bound CGAS cannot be activated by exogenous DNA in mitotic cells: phosphorylation of the N-terminal disordered part by AURKB during the G2-M transition blocks CGAS liquid phase separation and activation. Activity toward self-DNA is inhibited by BANF1/BAF upon acute loss of nuclear membrane integrity: BANF1/BAF acts by outcompeting CGAS for DNA-binding, thereby preventing CGAS activation. DNA-induced activation at micronuclei is also limited by TREX1, which degrades micronuclear DNA upon nuclear envelope rupture, thereby preventing CGAS activation. CGAS can be released from nucleosomes and activated by MRE11 component of the MRN complex, which displaces CGAS from acidic-patch-mediated sequestration. Acetylation at Lys-359, Lys-369 and Lys-389 inhibits the cyclic GMP-AMP synthase activity. Acetylation by KAT5 increases the cyclic GMP-AMP synthase activity by promoting DNA-binding and subsequent activation. Phosphorylation at Ser-278 suppresses the nucleotidyltransferase activity. Phosphorylation at Ser-410 promotes the cyclic GMP-AMP synthase activity. Phosphorylation at Ser-188 inhibits its cyclic GMP-AMP synthase activity. Ubiquitination at Lys-359 via 'Lys-27'-linked polyubiquitination enhances the cyclic GMP-AMP synthase activity. Monoubiquitination at Lys-322 promotes oligomerization and subsequent activation. Sumoylation at Lys-322, Lys-359 and Lys-369 prevents DNA-binding, oligomerization and nucleotidyltransferase activity. The enzyme activity is impaired by the cleavage by CASP1. In addition to DNA, also activated by collided ribosomes upon translation stress: specifically binds collided ribosomes, promoting its activation and triggering type-I interferon production. Nucleotidyltransferase that catalyzes the formation of cyclic GMP-AMP (2',3'-cGAMP) from ATP and GTP and plays a key role in innate immunity. Catalysis involves both the formation of a 2',5' phosphodiester linkage at the GpA step and the formation of a 3',5' phosphodiester linkage at the ApG step, producing c[G(2',5')pA(3',5')p]. Acts as a key DNA sensor: directly binds double-stranded DNA (dsDNA), inducing the formation of liquid-like droplets in which CGAS is activated, leading to synthesis of 2',3'-cGAMP, a second messenger that binds to and activates STING1, thereby triggering type-I interferon production. Preferentially binds long dsDNA (around 45 bp) and forms ladder-like networks that function cooperatively to stabilize individual cGAS-dsDNA complexes. Acts as a key foreign DNA sensor, the presence of double-stranded DNA (dsDNA) in the cytoplasm being a danger signal that triggers the immune responses. Has antiviral activity by sensing the presence of dsDNA from DNA viruses in the cytoplasm. Also acts as an innate immune sensor of infection by retroviruses by detecting the presence of reverse-transcribed DNA in the cytosol. Detection of retroviral reverse-transcribed DNA in the cytosol may be indirect and be mediated via interaction with PQBP1, which directly binds reverse-transcribed retroviral DNA. Also detects the presence of DNA from bacteria. 2',3'-cGAMP can be transferred from producing cells to neighboring cells through gap junctions, leading to promote STING1 activation and convey immune response to connecting cells. 2',3'-cGAMP can also be transferred between cells by virtue of packaging within viral particles contributing to IFN-induction in newly infected cells in a cGAS-independent but STING1-dependent manner. Also senses the presence of neutrophil extracellular traps (NETs) that are translocated to the cytosol following phagocytosis, leading to synthesis of 2',3'-cGAMP. In addition to foreign DNA, can also be activated by endogenous nuclear or mitochondrial DNA. When self-DNA leaks into the cytosol during cellular stress (such as mitochondrial stress, DNA damage, mitotic arrest or senescence), or is present in form of cytosolic micronuclei, CGAS is activated leading to a state of sterile inflammation. Acts as a regulator of cellular senescence by binding to cytosolic chromatin fragments that are present in senescent cells, leading to trigger type-I interferon production via STING1 and promote cellular senescence. Also involved in the inflammatory response to genome instability and double-stranded DNA breaks: acts by localizing to micronuclei arising from genome instability. Micronuclei, which are frequently found in cancer cells, consist of chromatin surrounded by their own nuclear membrane: following breakdown of the micronuclear envelope, a process associated with chromothripsis, CGAS binds self-DNA exposed to the cytosol, leading to 2',3'-cGAMP synthesis and subsequent activation of STING1 and type-I interferon production. In a healthy cell, CGAS is however kept inactive even in cellular events that directly expose it to self-DNA, such as mitosis, when cGAS associates with chromatin directly after nuclear envelope breakdown or remains in the form of postmitotic persistent nuclear cGAS pools bound to chromatin. Nuclear CGAS is inactivated by chromatin via direct interaction with nucleosomes, which block CGAS from DNA binding and thus prevent CGAS-induced autoimmunity. Also acts as a suppressor of DNA repair in response to DNA damage: inhibits homologous recombination repair by interacting with PARP1, the CGAS-PARP1 interaction leading to impede the formation of the PARP1-TIMELESS complex. In addition to DNA, also sense translation stress: in response to translation stress, translocates to the cytosol and associates with collided ribosomes, promoting its activation and triggering type-I interferon production. The chain is Cyclic GMP-AMP synthase from Sus scrofa (Pig).